Here is a 185-residue protein sequence, read N- to C-terminus: Elongation factor P (185 aa).

The protein belongs to the elongation factor P family.

It is found in the cytoplasm. Its pathway is protein biosynthesis; polypeptide chain elongation. In terms of biological role, involved in peptide bond synthesis. Stimulates efficient translation and peptide-bond synthesis on native or reconstituted 70S ribosomes in vitro. Probably functions indirectly by altering the affinity of the ribosome for aminoacyl-tRNA, thus increasing their reactivity as acceptors for peptidyl transferase. This is Elongation factor P from Cyanothece sp. (strain PCC 7425 / ATCC 29141).